We begin with the raw amino-acid sequence, 73 residues long: Copper chaperone ATX1 (73 aa).

The HMA domain occupies 4 to 68; it reads IKHYQFNVVM…KIKKTGKEVR (65 aa). 2 residues coordinate Cu(+): C15 and C18.

This sequence belongs to the ATX1 family. As to quaternary structure, homodimer. Interacts with CCC2 via the copper anion.

It localises to the cytoplasm. With respect to regulation, tetrathiomolybdate directly and reversibly down-regulates copper delivery to secreted metalloenzymes. Copper homeostasis factor that specifically transports copper to the secretory pathway for incorporation into copper enzymes destined for the cell surface or extracellular milieu. Shuttles copper to the transport ATPase CCC2 on a post-Golgi vesicle for eventual targeting to the cell-surface high-affinity iron uptake protein FET3. Protects against oxygen toxicity. This Saccharomyces cerevisiae (strain ATCC 204508 / S288c) (Baker's yeast) protein is Copper chaperone ATX1.